Here is a 125-residue protein sequence, read N- to C-terminus: Mediator of RNA polymerase II transcription subunit 11 (125 aa).

Belongs to the Mediator complex subunit 11 family. As to quaternary structure, component of the Mediator complex.

Its subcellular location is the nucleus. Component of the Mediator complex, a coactivator involved in the regulated transcription of nearly all RNA polymerase II-dependent genes. Mediator functions as a bridge to convey information from gene-specific regulatory proteins to the basal RNA polymerase II transcription machinery. Mediator is recruited to promoters by direct interactions with regulatory proteins and serves as a scaffold for the assembly of a functional pre-initiation complex with RNA polymerase II and the general transcription factors. This is Mediator of RNA polymerase II transcription subunit 11 (MED11) from Candida glabrata (strain ATCC 2001 / BCRC 20586 / JCM 3761 / NBRC 0622 / NRRL Y-65 / CBS 138) (Yeast).